The sequence spans 516 residues: Levanbiose-producing levanase (516 aa).

Topologically, residues 1-5 (MNYIK) are cytoplasmic. Residues 6–26 (AGKWLTVFLTFLGILLFIDLF) form a helical membrane-spanning segment. The Extracellular portion of the chain corresponds to 27 to 516 (PKEEHDQKTK…TVKHFDSIHE (490 aa)). Residues 55 to 58 (WKND), 116 to 117 (WT), 181 to 182 (RD), glutamate 230, and tryptophan 318 contribute to the substrate site. Residue aspartate 58 is part of the active site.

Belongs to the glycosyl hydrolase 32 family.

It is found in the cell membrane. The enzyme catalyses Hydrolysis of (2-&gt;6)-beta-D-fructofuranan, to remove successive disaccharide residues as levanbiose, i.e. 6-(beta-D-fructofuranosyl)-D-fructose, from the end of the chain.. In terms of biological role, catalyzes the degradation of levan mainly into levanbiose (difructose). Is not active on sucrose. The chain is Levanbiose-producing levanase (levB) from Bacillus subtilis (strain 168).